We begin with the raw amino-acid sequence, 379 residues long: L-lactate dehydrogenase (379 aa).

One can recognise an FMN hydroxy acid dehydrogenase domain in the interval 1–379 (MIISASTDYR…IGRDSLVNLP (379 aa)). Residue Tyr-24 participates in substrate binding. 2 residues coordinate FMN: Ser-106 and Gln-127. Tyr-129 serves as a coordination point for substrate. Thr-155 provides a ligand contact to FMN. Residue Arg-164 participates in substrate binding. Residue Lys-251 participates in FMN binding. His-275 (proton acceptor) is an active-site residue. Arg-278 contacts substrate. 306–330 (DSGIRTGLDVVRMLALGADTVLLGR) contacts FMN.

This sequence belongs to the FMN-dependent alpha-hydroxy acid dehydrogenase family. FMN is required as a cofactor.

The protein resides in the cell inner membrane. It carries out the reaction (S)-lactate + A = pyruvate + AH2. Functionally, catalyzes the conversion of L-lactate to pyruvate. Is coupled to the respiratory chain. The sequence is that of L-lactate dehydrogenase from Stenotrophomonas maltophilia (strain R551-3).